A 110-amino-acid polypeptide reads, in one-letter code: Insulin growth factor-like family member 1 (110 aa).

The signal sequence occupies residues 1–24 (MAPRGCIVAVFAIFCISRLLCSHG). The N-linked (GlcNAc...) asparagine glycan is linked to Asn-71.

Belongs to the IGFL family. As to quaternary structure, homodimer; disulfide-linked. As to expression, detected in ovary and spinal cord.

Its subcellular location is the secreted. Probable ligand of the IGFLR1 cell membrane receptor. In Homo sapiens (Human), this protein is Insulin growth factor-like family member 1 (IGFL1).